We begin with the raw amino-acid sequence, 445 residues long: MSSIDPATFAAQFAQIEIQPFKQRYQLQTNTYQSQLSALGKVESAMREFRTALNEMNSSTNSIIKNSTSISQEGYFTANADAKALSGSYQIFVEQVATSHQVSTGMPADLDATTEIPKTGNLEFTINGKTMTIDLSTVDTDGDGVTTVSDLTKAINNNSDNPGVNATLVRSNGQTHFMLSSTETGVANQINVSATGTGQAWFEDAFTNLSQISAPQDAVIWLGAEKTGLKLTNSSNTFEGVIDGVDITVTKAQTSGETAIGLGIGADDEATKEQLNKFVDAYNTLISTIDEHTQIGSEDKKRGVLASDPTMRSIESQLSSLVRGEHGGMRLSEIGVTLDRHGKLKVDQEKFAEAQKNNSAGLEAMFNGDGALLDSMDAMAEPFLKFSSGAFKSRKEALQANLDRLSDKQTTLERKYDMSYKRYLKQFTQMNTLMTQMNQTMSMFG.

Residues 388–423 (SGAFKSRKEALQANLDRLSDKQTTLERKYDMSYKRY) are a coiled coil.

The protein belongs to the FliD family. In terms of assembly, homopentamer.

The protein resides in the secreted. It is found in the bacterial flagellum. In terms of biological role, required for the morphogenesis and for the elongation of the flagellar filament by facilitating polymerization of the flagellin monomers at the tip of growing filament. Forms a capping structure, which prevents flagellin subunits (transported through the central channel of the flagellum) from leaking out without polymerization at the distal end. Essential for swarming motility. The protein is Lateral flagellar hook-associated protein 2 (fliDL) of Vibrio parahaemolyticus serotype O3:K6 (strain RIMD 2210633).